The chain runs to 120 residues: SFFYSLFKGTYNFIYVTIYSYLVDRTKMFFPFFFYLFLFICLSNLVGIVPFSFTITSHLNITFSLSFLVWWATCLLGFYESGLAFIAIFYVKGIPFVLVPFWALIEVISFIFRSVGLSLR.

The next 4 membrane-spanning stretches (helical) occupy residues 2 to 22 (FFYS…YSYL), 29 to 49 (FFPF…VGIV), 59 to 79 (LNIT…LGFY), and 94 to 116 (IPFV…RSVG).

This sequence belongs to the ATPase A chain family. F-type ATPases have 2 components, CF(1) - the catalytic core - and CF(0) - the membrane proton channel. CF(1) has five subunits: alpha(3), beta(3), gamma(1), delta(1), epsilon(1). CF(0) has three main subunits: a, b and c.

Its subcellular location is the mitochondrion inner membrane. Mitochondrial membrane ATP synthase (F(1)F(0) ATP synthase or Complex V) produces ATP from ADP in the presence of a proton gradient across the membrane which is generated by electron transport complexes of the respiratory chain. F-type ATPases consist of two structural domains, F(1) - containing the extramembraneous catalytic core and F(0) - containing the membrane proton channel, linked together by a central stalk and a peripheral stalk. During catalysis, ATP synthesis in the catalytic domain of F(1) is coupled via a rotary mechanism of the central stalk subunits to proton translocation. Key component of the proton channel; it may play a direct role in the translocation of protons across the membrane. The chain is ATP synthase subunit a (ATP6) from Naegleria fowleri (Brain eating amoeba).